The chain runs to 253 residues: Regulatory protein VirG (253 aa).

The Response regulatory domain occupies 15 to 129; that stretch reads HVLVIDDDVA…EFLARIRVAL (115 aa). Aspartate 64 is subject to 4-aspartylphosphate. The ompR/PhoB-type DNA-binding region spans 141 to 241; that stretch reads RRSFSFADWT…ARGAGYFFDA (101 aa).

Phosphorylated by wide host range (WHR) VirA protein.

The protein resides in the cytoplasm. In terms of biological role, virG is required for the positive regulation of at least two vir loci encoded by the Ti plasmid of A.tumefaciens. The chain is Regulatory protein VirG (virG) from Agrobacterium fabrum (strain C58 / ATCC 33970) (Agrobacterium tumefaciens (strain C58)).